We begin with the raw amino-acid sequence, 485 residues long: Vacuolar fusion protein CCZ1 homolog (485 aa).

It belongs to the CCZ1 family. As to quaternary structure, component of the Mon1-Ccz1 guanyl-nucleotide exchange factor complex made up of Mon1, Ccz1 and Bulli; the interaction of Bulli with the Mon1-Ccz1 heterodimer is mediated via the C-terminal Mic1 domain of Bulli. Mon1 and Ccz1 form a stable complex which displays Rab7 GEF activity with or without Bulli; GEF activity is enhanced by Bulli possibly by improving membrane association of the complex. Interacts with Rab5 and Rab7; preferentially binds GTP-bound Rab5 and GDP-bound Rab7.

The protein resides in the cytoplasm. It is found in the cytosol. With respect to regulation, the Rab7 guanyl-nucleotide exchange factor (GEF) activity of the Mon1-Ccz1 complex is autoinhibited by the N-terminal disordered region of Mon1. GEF activity is stimulated by Rab5-mediated recruitment to membranes. Its function is as follows. Part of the Mon1-Ccz1 guanyl-nucleotide exchange factor complex specific for Rab7 that promotes the exchange of GDP to GTP, converting Rab7 from an inactive GDP-bound form into an active GTP-bound form. Required for recruitment of Rab7 to endosomal and autophagosomal membranes to mediate endolysosomal and autolysosomal vesicle maturation. Required for fusion of multivesicular bodies and lysosomes but not their formation or trafficking. Involved in the replacement of Rab5 (and possibly Rab4) with Rab7, also known as Rab conversion or the Rab cascade, during endosomal maturation. The Mon1-Ccz1 complex is recruited to phosphatidylinositol 3-phosphate (PtdIns[3]P) enriched membranes by Rab5, which stimulates recruitment and guanyl-nucleotide exchange of Rab7. Together with Rab7 required for autolysosome formation in fat cells and autophagic degradation during starvation-induced basal and developmental autophagy. This is Vacuolar fusion protein CCZ1 homolog from Drosophila melanogaster (Fruit fly).